The chain runs to 262 residues: S-methyl-5'-thioadenosine phosphorylase (262 aa).

Phosphate-binding positions include Ser-12, Arg-54 to His-55, and Ser-87 to Ala-88. Met-185 serves as a coordination point for substrate. Residue Thr-186 coordinates phosphate. A substrate-binding site is contributed by Asp-209–Asp-211.

Belongs to the PNP/MTAP phosphorylase family. MTAP subfamily. As to quaternary structure, homohexamer. Dimer of a homotrimer.

The enzyme catalyses S-methyl-5'-thioadenosine + phosphate = 5-(methylsulfanyl)-alpha-D-ribose 1-phosphate + adenine. It functions in the pathway amino-acid biosynthesis; L-methionine biosynthesis via salvage pathway; S-methyl-5-thio-alpha-D-ribose 1-phosphate from S-methyl-5'-thioadenosine (phosphorylase route): step 1/1. Catalyzes the reversible phosphorylation of S-methyl-5'-thioadenosine (MTA) to adenine and 5-methylthioribose-1-phosphate. Involved in the breakdown of MTA, a major by-product of polyamine biosynthesis. Responsible for the first step in the methionine salvage pathway after MTA has been generated from S-adenosylmethionine. Has broad substrate specificity with 6-aminopurine nucleosides as preferred substrates. In Thermofilum pendens (strain DSM 2475 / Hrk 5), this protein is S-methyl-5'-thioadenosine phosphorylase.